Consider the following 476-residue polypeptide: Glutamyl-tRNA(Gln) amidotransferase subunit A (476 aa).

Residues Lys70 and Ser145 each act as charge relay system in the active site. The active-site Acyl-ester intermediate is Ser169.

Belongs to the amidase family. GatA subfamily. In terms of assembly, heterotrimer of A, B and C subunits.

The catalysed reaction is L-glutamyl-tRNA(Gln) + L-glutamine + ATP + H2O = L-glutaminyl-tRNA(Gln) + L-glutamate + ADP + phosphate + H(+). In terms of biological role, allows the formation of correctly charged Gln-tRNA(Gln) through the transamidation of misacylated Glu-tRNA(Gln) in organisms which lack glutaminyl-tRNA synthetase. The reaction takes place in the presence of glutamine and ATP through an activated gamma-phospho-Glu-tRNA(Gln). The polypeptide is Glutamyl-tRNA(Gln) amidotransferase subunit A (Methanosarcina acetivorans (strain ATCC 35395 / DSM 2834 / JCM 12185 / C2A)).